Here is a 178-residue protein sequence, read N- to C-terminus: Putative metal-dependent hydrolase GTNG_0529 (178 aa).

The Zn(2+) site is built by His68, His161, and His165.

Belongs to the metal hydrolase YfiT family. Homodimer. Zn(2+) is required as a cofactor.

It is found in the cytoplasm. In terms of biological role, possible metal-dependent hydrolase. The sequence is that of Putative metal-dependent hydrolase GTNG_0529 from Geobacillus thermodenitrificans (strain NG80-2).